The sequence spans 423 residues: Gamma-glutamyl phosphate reductase 2 (423 aa).

It belongs to the gamma-glutamyl phosphate reductase family.

The protein resides in the cytoplasm. It catalyses the reaction L-glutamate 5-semialdehyde + phosphate + NADP(+) = L-glutamyl 5-phosphate + NADPH + H(+). It participates in amino-acid biosynthesis; L-proline biosynthesis; L-glutamate 5-semialdehyde from L-glutamate: step 2/2. Its function is as follows. Catalyzes the NADPH-dependent reduction of L-glutamate 5-phosphate into L-glutamate 5-semialdehyde and phosphate. The product spontaneously undergoes cyclization to form 1-pyrroline-5-carboxylate. In Bacillus licheniformis (strain ATCC 14580 / DSM 13 / JCM 2505 / CCUG 7422 / NBRC 12200 / NCIMB 9375 / NCTC 10341 / NRRL NRS-1264 / Gibson 46), this protein is Gamma-glutamyl phosphate reductase 2.